The sequence spans 201 residues: Akirin (201 aa).

The tract at residues 1 to 133 (MACATLKRAL…PRRPDSPQNL (133 aa)) is disordered. Residues 20–25 (PKRRRC) carry the Nuclear localization signal motif. Phosphoserine occurs at positions 39 and 41. 2 stretches are compositionally biased toward polar residues: residues 44 to 57 (GPST…TPSN) and 65 to 75 (EPSPFSESSLA). S67 is subject to Phosphoserine. Low complexity predominate over residues 112–122 (SESSGSEMGPE). S123 and S129 each carry phosphoserine.

Belongs to the akirin family. In terms of assembly, interacts with dmap1. Interacts with bap60 and rel; interaction is immune stimulation-dependent; activates selected rel target gene promoters. Interacts with bap55; interaction is immune stimulation-dependent. Interacts with twi. In terms of processing, polyubiquitinated via 'Lys-63'-linked ubiquitin by Hyd, promoting interaction with rel. In terms of tissue distribution, ubiquitous.

The protein localises to the nucleus. In terms of biological role, molecular adapter that acts as a bridge between a variety of multiprotein complexes, and which is required for embryonic development and for normal innate immune response. Acts as a regulator of embryonic myogenesis by bridging Twist (twi) with the SWI/SNF-like Brahma complex, promoting expression of twi-regulated genes during myogenesis. Effector of immune deficiency pathway (Imd) by acting either downstream of, or at the level of, the NF-kappa-B factor Relish (Rel). Acts by bridging the NF-kappa-B factor Rel and the Brahma complex through bap60 interaction, leading to activation a subset of NF-kappa-B factor Relish (Rel) effector genes. Not part of the Toll pathway. Required for the formation of the heart by promoting expression ot tinman (tin). This is Akirin from Drosophila melanogaster (Fruit fly).